The primary structure comprises 398 residues: Dual specificity mitogen-activated protein kinase kinase 2 (398 aa).

The interval 1–29 (MPAKRKPVLPALTITPSPAEGPGPGGSAE) is disordered. A Protein kinase domain is found at 70 to 367 (FERISELGAG…LKMLMNHTFI (298 aa)). ATP contacts are provided by residues 76 to 84 (LGAGNGGVV) and Lys99. Asp192 functions as the Proton acceptor in the catalytic mechanism. Residues Ser220 and Ser224 each carry the phosphoserine; by RAF modification.

This sequence belongs to the protein kinase superfamily. STE Ser/Thr protein kinase family. MAP kinase kinase subfamily. In terms of processing, activated by phosphorylation on Ser/Thr catalyzed by MAP kinase kinase kinases (RAF).

The enzyme catalyses L-seryl-[protein] + ATP = O-phospho-L-seryl-[protein] + ADP + H(+). It carries out the reaction L-threonyl-[protein] + ATP = O-phospho-L-threonyl-[protein] + ADP + H(+). It catalyses the reaction L-tyrosyl-[protein] + ATP = O-phospho-L-tyrosyl-[protein] + ADP + H(+). Its function is as follows. Catalyzes the concomitant phosphorylation of a threonine and a tyrosine residue in a Thr-Glu-Tyr sequence located in MAP kinases. Activates the ERK1 and ERK2 MAP kinases. In Gallus gallus (Chicken), this protein is Dual specificity mitogen-activated protein kinase kinase 2 (MAP2K2).